The chain runs to 132 residues: Small ribosomal subunit protein uS8 (132 aa).

Belongs to the universal ribosomal protein uS8 family. Part of the 30S ribosomal subunit. Contacts proteins S5 and S12.

One of the primary rRNA binding proteins, it binds directly to 16S rRNA central domain where it helps coordinate assembly of the platform of the 30S subunit. This chain is Small ribosomal subunit protein uS8, found in Acidobacterium capsulatum (strain ATCC 51196 / DSM 11244 / BCRC 80197 / JCM 7670 / NBRC 15755 / NCIMB 13165 / 161).